Consider the following 553-residue polypeptide: ATP synthase F(1) complex subunit alpha, mitochondrial (553 aa).

The N-terminal 43 residues, 1 to 43 (MLSVRIAAAVARALPRRAGLVSKNALGSSFVGTRNLHASNTRL), are a transit peptide targeting the mitochondrion. Ser53 and Ser65 each carry phosphoserine. A Phosphoserine; alternate modification is found at Ser76. A glycan (O-linked (GlcNAc) serine; alternate) is linked at Ser76. Ser106 carries the post-translational modification Phosphoserine. Lys123, Lys126, and Lys132 each carry N6-acetyllysine. At Thr134 the chain carries Phosphothreonine. Lys161 bears the N6-acetyllysine; alternate mark. The residue at position 161 (Lys161) is an N6-succinyllysine; alternate. Residue Ser166 is modified to Phosphoserine. The residue at position 167 (Lys167) is an N6-acetyllysine; alternate. An N6-succinyllysine; alternate modification is found at Lys167. Phosphoserine is present on Ser184. Position 204 is an omega-N-methylarginine (Arg204). ATP contacts are provided by Gln215, Gly217, Lys218, Thr219, and Ser220. Thr219 serves as a coordination point for Mg(2+). 2 positions are modified to N6-acetyllysine; alternate: Lys230 and Lys239. Residues Lys230 and Lys239 each carry the N6-succinyllysine; alternate modification. Lys240 carries the post-translational modification N6-acetyllysine. N6-acetyllysine; alternate is present on residues Lys261 and Lys305. N6-succinyllysine; alternate is present on residues Lys261 and Lys305. Position 312 (Asp312) interacts with Mg(2+). The residue at position 427 (Lys427) is an N6-acetyllysine; alternate. Lys427 bears the N6-succinyllysine; alternate mark. Lys434 bears the N6-acetyllysine mark. ATP is bound by residues Gln473 and Gln475. N6-acetyllysine; alternate occurs at positions 498, 506, 531, and 539. N6-succinyllysine; alternate occurs at positions 498, 506, 531, and 539. Residue Lys541 is modified to N6-acetyllysine.

The protein belongs to the ATPase alpha/beta chains family. In terms of assembly, homotrimer. Component of the ATP synthase complex composed at least of ATP5F1A/subunit alpha, ATP5F1B/subunit beta, ATP5MC1/subunit c (homooctomer), MT-ATP6/subunit a, MT-ATP8/subunit 8, ATP5ME/subunit e, ATP5MF/subunit f, ATP5MG/subunit g, ATP5MK/subunit k, ATP5MJ/subunit j, ATP5F1C/subunit gamma, ATP5F1D/subunit delta, ATP5F1E/subunit epsilon, ATP5PF/subunit F6, ATP5PB/subunit b, ATP5PD/subunit d, ATP5PO/subunit OSCP. ATP synthase complex consists of a soluble F(1) head domain (subunits alpha(3) and beta(3)) - the catalytic core - and a membrane F(0) domain - the membrane proton channel (subunits c, a, 8, e, f, g, k and j). These two domains are linked by a central stalk (subunits gamma, delta, and epsilon) rotating inside the F1 region and a stationary peripheral stalk (subunits F6, b, d, and OSCP). Interacts with ATPAF2. Interacts with HRG; the interaction occurs on the surface of T-cells and alters the cell morphology when associated with concanavalin (in vitro). Interacts with PLG (angiostatin peptide); the interaction inhibits most of the angiogenic properties of angiostatin. Interacts with BLOC1S1. Interacts with BCL2L1 isoform BCL-X(L); the interaction mediates the association of BCL2L1 isoform BCL-X(L) with the mitochondrial membrane F(1)F(0) ATP synthase and enhances neurons metabolic efficiency. Interacts with CLN5 and PPT1. Interacts with S100A1; this interaction increases F1-ATPase activity. Interacts with ABCB7; this interaction allows the regulation of cellular iron homeostasis and cellular reactive oxygen species (ROS) levels in cardiomyocytes. In terms of processing, acetylated on lysine residues. BLOC1S1 is required for acetylation. Expressed in flagella of epididymal sperm.

The protein localises to the mitochondrion. It is found in the mitochondrion inner membrane. Its subcellular location is the cell membrane. Its function is as follows. Subunit alpha, of the mitochondrial membrane ATP synthase complex (F(1)F(0) ATP synthase or Complex V) that produces ATP from ADP in the presence of a proton gradient across the membrane which is generated by electron transport complexes of the respiratory chain. ATP synthase complex consist of a soluble F(1) head domain - the catalytic core - and a membrane F(1) domain - the membrane proton channel. These two domains are linked by a central stalk rotating inside the F(1) region and a stationary peripheral stalk. During catalysis, ATP synthesis in the catalytic domain of F(1) is coupled via a rotary mechanism of the central stalk subunits to proton translocation. In vivo, can only synthesize ATP although its ATP hydrolase activity can be activated artificially in vitro. With the catalytic subunit beta (ATP5F1B), forms the catalytic core in the F(1) domain. Subunit alpha does not bear the catalytic high-affinity ATP-binding sites. The chain is ATP synthase F(1) complex subunit alpha, mitochondrial from Rattus norvegicus (Rat).